Consider the following 1010-residue polypeptide: Translation initiation factor IF-2 (1010 aa).

Disordered regions lie at residues 54-350 and 364-420; these read KGLA…FEDD and PSFT…RPES. The segment covering 57–70 has biased composition (polar residues); that stretch reads ASSTSKNSTGQRES. Over residues 112–124 the composition is skewed to pro residues; sequence ISPPRPPVKPLVA. Positions 145–155 are enriched in polar residues; the sequence is HSPSVKETPTE. Residues 200 to 258 show a composition bias toward basic and acidic residues; the sequence is DRPRGEKRERGESENAPSPERRVGLAKPEKPTLNRKPDGKSPKLAEPAREVRETVELKR. The segment covering 378–389 has biased composition (low complexity); the sequence is TAKAAPPGTPTA. A compositionally biased stretch (basic and acidic residues) spans 406–419; it reads KSERQEPQEEKRPE. The tr-type G domain occupies 502–675; the sequence is RRPPVVTIMG…LLVAEVEELV (174 aa). The tract at residues 511-518 is G1; it reads GHVDHGKT. 511–518 contacts GTP; it reads GHVDHGKT. The interval 536 to 540 is G2; that stretch reads GITQH. The segment at 561–564 is G3; sequence DTPG. Residues 561–565 and 615–618 each bind GTP; these read DTPGH and NKVD. Residues 615-618 form a G4 region; sequence NKVD. Positions 651-653 are G5; it reads SAL.

It belongs to the TRAFAC class translation factor GTPase superfamily. Classic translation factor GTPase family. IF-2 subfamily.

The protein resides in the cytoplasm. Its function is as follows. One of the essential components for the initiation of protein synthesis. Protects formylmethionyl-tRNA from spontaneous hydrolysis and promotes its binding to the 30S ribosomal subunits. Also involved in the hydrolysis of GTP during the formation of the 70S ribosomal complex. The polypeptide is Translation initiation factor IF-2 (Microcystis aeruginosa (strain NIES-843 / IAM M-2473)).